Consider the following 351-residue polypeptide: NADP-dependent isopropanol dehydrogenase (351 aa).

4 residues coordinate Zn(2+): C37, H59, E60, and D150. NADP(+) contacts are provided by residues 175 to 178 (IGAV), 198 to 200 (GSR), Y218, 265 to 267 (INY), and K340.

The protein belongs to the zinc-containing alcohol dehydrogenase family. In terms of assembly, homotetramer. Requires Zn(2+) as cofactor.

It carries out the reaction propan-2-ol + NADP(+) = acetone + NADPH + H(+). In terms of biological role, alcohol dehydrogenase with a preference for medium chain secondary alcohols, such as 2-butanol and isopropanol. Has very low activity with primary alcohols, such as ethanol. Under physiological conditions, the enzyme reduces aldehydes and 2-ketones to produce secondary alcohols. Is active with acetaldehyde and propionaldehyde. This is NADP-dependent isopropanol dehydrogenase (adh) from Clostridium beijerinckii (Clostridium MP).